A 581-amino-acid chain; its full sequence is Arginine--tRNA ligase (581 aa).

A 'HIGH' region motif is present at residues 126–136 (PNLAKEMHVGH).

The protein belongs to the class-I aminoacyl-tRNA synthetase family. As to quaternary structure, monomer.

The protein localises to the cytoplasm. The catalysed reaction is tRNA(Arg) + L-arginine + ATP = L-arginyl-tRNA(Arg) + AMP + diphosphate. In Shewanella woodyi (strain ATCC 51908 / MS32), this protein is Arginine--tRNA ligase.